A 310-amino-acid polypeptide reads, in one-letter code: ADP-L-glycero-D-manno-heptose-6-epimerase (310 aa).

Residues 10-11, 31-32, Lys-38, Lys-53, 75-79, and Asn-92 each bind NADP(+); these read FI, DN, and EGACS. The active-site Proton acceptor is the Tyr-140. Lys-144 contacts NADP(+). Asn-169 contributes to the substrate binding site. Residues Val-170 and Lys-178 each coordinate NADP(+). Lys-178 functions as the Proton acceptor in the catalytic mechanism. Residues Ser-180, His-187, 201–204, Arg-209, and Tyr-272 each bind substrate; that span reads FSGS.

Belongs to the NAD(P)-dependent epimerase/dehydratase family. HldD subfamily. As to quaternary structure, homopentamer. The cofactor is NADP(+).

It carries out the reaction ADP-D-glycero-beta-D-manno-heptose = ADP-L-glycero-beta-D-manno-heptose. Its pathway is nucleotide-sugar biosynthesis; ADP-L-glycero-beta-D-manno-heptose biosynthesis; ADP-L-glycero-beta-D-manno-heptose from D-glycero-beta-D-manno-heptose 7-phosphate: step 4/4. Catalyzes the interconversion between ADP-D-glycero-beta-D-manno-heptose and ADP-L-glycero-beta-D-manno-heptose via an epimerization at carbon 6 of the heptose. In Pectobacterium carotovorum subsp. carotovorum (strain PC1), this protein is ADP-L-glycero-D-manno-heptose-6-epimerase.